The sequence spans 150 residues: 3-dehydroquinate dehydratase (150 aa).

Residue Y26 is the Proton acceptor of the active site. Residues N77, H83, and D90 each coordinate substrate. H103 serves as the catalytic Proton donor. Substrate contacts are provided by residues 104–105 (LS) and R114.

It belongs to the type-II 3-dehydroquinase family. In terms of assembly, homododecamer.

The enzyme catalyses 3-dehydroquinate = 3-dehydroshikimate + H2O. It functions in the pathway metabolic intermediate biosynthesis; chorismate biosynthesis; chorismate from D-erythrose 4-phosphate and phosphoenolpyruvate: step 3/7. Catalyzes a trans-dehydration via an enolate intermediate. This is 3-dehydroquinate dehydratase from Enterobacter sp. (strain 638).